The sequence spans 373 residues: MDFRIIARDASCHARRGRLRTAHGTFDTPVFMPVGTQASVKSLSPDELEDLGAHIILGNTYHLLLRPGAERVARLGGLHRFMHWNRSILTDSGGFQVFSLARINRIEEDGVVFQSHIDGARHAITPETSMECQMQLGSDIAMCFDECTAYPVTYEYARESMLRTVRWAARSKEAHTLPEQSLFGIVQGGVFCDLRRDCLERLVETGFDGYALGSLSVGESKEEMLSVLEAVAPGLPAASPRYVMGVGTPEDLVEGVRCGVDMFDCVMPTRNARNGMLFTVRGGIQIKNSRYADDDRPIEEGCSCYTCRRFSRAYLRHLFLARELLAYRLNTLHNLHYYLGLMAAMREAIEANAFDRWRRSFYLDRENREPAEE.

Aspartate 91 serves as the catalytic Proton acceptor. Substrate-binding positions include 91-95, aspartate 145, and glutamine 187; that span reads DSGGF. The interval 245–251 is RNA binding; that stretch reads GVGTPED. The active-site Nucleophile is the aspartate 264. The interval 269–273 is RNA binding; important for wobble base 34 recognition; that stretch reads TRNAR. Zn(2+) is bound by residues cysteine 302, cysteine 304, cysteine 307, and histidine 333.

The protein belongs to the queuine tRNA-ribosyltransferase family. As to quaternary structure, homodimer. Within each dimer, one monomer is responsible for RNA recognition and catalysis, while the other monomer binds to the replacement base PreQ1. Zn(2+) is required as a cofactor.

The enzyme catalyses 7-aminomethyl-7-carbaguanine + guanosine(34) in tRNA = 7-aminomethyl-7-carbaguanosine(34) in tRNA + guanine. The protein operates within tRNA modification; tRNA-queuosine biosynthesis. Catalyzes the base-exchange of a guanine (G) residue with the queuine precursor 7-aminomethyl-7-deazaguanine (PreQ1) at position 34 (anticodon wobble position) in tRNAs with GU(N) anticodons (tRNA-Asp, -Asn, -His and -Tyr). Catalysis occurs through a double-displacement mechanism. The nucleophile active site attacks the C1' of nucleotide 34 to detach the guanine base from the RNA, forming a covalent enzyme-RNA intermediate. The proton acceptor active site deprotonates the incoming PreQ1, allowing a nucleophilic attack on the C1' of the ribose to form the product. After dissociation, two additional enzymatic reactions on the tRNA convert PreQ1 to queuine (Q), resulting in the hypermodified nucleoside queuosine (7-(((4,5-cis-dihydroxy-2-cyclopenten-1-yl)amino)methyl)-7-deazaguanosine). This is Queuine tRNA-ribosyltransferase from Syntrophobacter fumaroxidans (strain DSM 10017 / MPOB).